Reading from the N-terminus, the 857-residue chain is Cation/H(+) antiporter 25 (857 aa).

Transmembrane regions (helical) follow at residues 65–85 (FSTF…VYVL), 93–110 (RIVC…SMLG), 122–142 (PIAN…FFFL), 161–181 (YIAA…GAAL), 194–214 (SIGG…YTVL), 227–247 (FAMS…VLFE), 259–279 (YSVI…LLVV), 313–333 (FLTD…GLVV), 385–405 (IYMS…AALF), 413–435 (SLTL…LHWI), and 447–467 (VMVL…SFLY). The residue at position 855 (S855) is a Phosphoserine.

It belongs to the monovalent cation:proton antiporter 2 (CPA2) transporter (TC 2.A.37) family. CHX (TC 2.A.37.4) subfamily. In terms of tissue distribution, specifically expressed in pollen.

The protein localises to the membrane. Functionally, may operate as a cation/H(+) antiporter. This is Cation/H(+) antiporter 25 (CHX25) from Arabidopsis thaliana (Mouse-ear cress).